Reading from the N-terminus, the 391-residue chain is 3-ketoacyl-CoA thiolase (391 aa).

The active-site Acyl-thioester intermediate is Cys95. Residues His347 and Cys377 each act as proton acceptor in the active site.

This sequence belongs to the thiolase-like superfamily. Thiolase family. Heterotetramer of two alpha chains (FadB) and two beta chains (FadA).

It is found in the cytoplasm. It carries out the reaction an acyl-CoA + acetyl-CoA = a 3-oxoacyl-CoA + CoA. Its pathway is lipid metabolism; fatty acid beta-oxidation. In terms of biological role, catalyzes the final step of fatty acid oxidation in which acetyl-CoA is released and the CoA ester of a fatty acid two carbons shorter is formed. The polypeptide is 3-ketoacyl-CoA thiolase (Vibrio parahaemolyticus serotype O3:K6 (strain RIMD 2210633)).